An 878-amino-acid chain; its full sequence is Alanine--tRNA ligase (878 aa).

Zn(2+)-binding residues include histidine 562, histidine 566, cysteine 670, and histidine 674.

It belongs to the class-II aminoacyl-tRNA synthetase family. Zn(2+) serves as cofactor.

The protein localises to the cytoplasm. It catalyses the reaction tRNA(Ala) + L-alanine + ATP = L-alanyl-tRNA(Ala) + AMP + diphosphate. Functionally, catalyzes the attachment of alanine to tRNA(Ala) in a two-step reaction: alanine is first activated by ATP to form Ala-AMP and then transferred to the acceptor end of tRNA(Ala). Also edits incorrectly charged Ser-tRNA(Ala) and Gly-tRNA(Ala) via its editing domain. This Acinetobacter baumannii (strain ACICU) protein is Alanine--tRNA ligase.